The following is a 149-amino-acid chain: Oocyte-expressed protein homolog (149 aa).

A disordered region spans residues 1-22 (MVDDAGAAESQRGKQTPAHSLE). Residues 49-110 (PLVFYLEAWL…RVQNRVKSML (62 aa)) form the KH; atypical domain.

This sequence belongs to the KHDC1 family. Component of the subcortical maternal complex (SCMC), at least composed of NLRP5, KHDC3L, OOEP, and TLE6 isoform 1. Within the complex, interacts with NLRP5, KHDC3L and TLE6 isoform 1. As part of the SCMC interacts with the SCMC-associated protein NLRP4F. The SCMC may facilitate translocation of its components between the nuclear and cytoplasmic compartments. Forms a scaffold complex with KHDC3L/FILIA, and interacts with BLM and TRIM25 at DNA replication forks.

The protein resides in the cytoplasm. It localises to the nucleus. Component of the subcortical maternal complex (SCMC), a multiprotein complex that plays a key role in early embryonic development. The SCMC complex is a structural constituent of cytoplasmic lattices, which consist in fibrous structures found in the cytoplasm of oocytes and preimplantation embryos. They are required to store maternal proteins critical for embryonic development, such as proteins that control epigenetic reprogramming of the preimplantation embryo, and prevent their degradation or activation. As part of the OOEP-KHDC3 scaffold, recruits BLM and TRIM25 to DNA replication forks, thereby promoting the ubiquitination of BLM by TRIM25, enhancing BLM retainment at replication forks and therefore promoting stalled replication fork restart. Positively regulates the homologous recombination-mediated DNA double-strand break (DSB) repair pathway by regulating ATM activation and RAD51 recruitment to DSBs in oocytes. Thereby contributes to oocyte survival and the resumption and completion of meiosis. This Homo sapiens (Human) protein is Oocyte-expressed protein homolog.